Here is a 179-residue protein sequence, read N- to C-terminus: Large ribosomal subunit protein uL5 (179 aa).

Belongs to the universal ribosomal protein uL5 family. In terms of assembly, part of the 50S ribosomal subunit; part of the 5S rRNA/L5/L18/L25 subcomplex. Contacts the 5S rRNA and the P site tRNA. Forms a bridge to the 30S subunit in the 70S ribosome.

This is one of the proteins that bind and probably mediate the attachment of the 5S RNA into the large ribosomal subunit, where it forms part of the central protuberance. In the 70S ribosome it contacts protein S13 of the 30S subunit (bridge B1b), connecting the 2 subunits; this bridge is implicated in subunit movement. Contacts the P site tRNA; the 5S rRNA and some of its associated proteins might help stabilize positioning of ribosome-bound tRNAs. The protein is Large ribosomal subunit protein uL5 of Vibrio parahaemolyticus serotype O3:K6 (strain RIMD 2210633).